Here is a 321-residue protein sequence, read N- to C-terminus: Biotin synthase (321 aa).

Positions 44 to 273 (FCGNVFDLCT…DGFVRIAAGR (230 aa)) constitute a Radical SAM core domain. [4Fe-4S] cluster is bound by residues cysteine 62, cysteine 66, and cysteine 69. [2Fe-2S] cluster contacts are provided by serine 106, cysteine 138, cysteine 198, and arginine 268.

This sequence belongs to the radical SAM superfamily. Biotin synthase family. Homodimer. [4Fe-4S] cluster serves as cofactor. Requires [2Fe-2S] cluster as cofactor.

It carries out the reaction (4R,5S)-dethiobiotin + (sulfur carrier)-SH + 2 reduced [2Fe-2S]-[ferredoxin] + 2 S-adenosyl-L-methionine = (sulfur carrier)-H + biotin + 2 5'-deoxyadenosine + 2 L-methionine + 2 oxidized [2Fe-2S]-[ferredoxin]. The protein operates within cofactor biosynthesis; biotin biosynthesis; biotin from 7,8-diaminononanoate: step 2/2. In terms of biological role, catalyzes the conversion of dethiobiotin (DTB) to biotin by the insertion of a sulfur atom into dethiobiotin via a radical-based mechanism. In Akkermansia muciniphila (strain ATCC BAA-835 / DSM 22959 / JCM 33894 / BCRC 81048 / CCUG 64013 / CIP 107961 / Muc), this protein is Biotin synthase.